Here is a 245-residue protein sequence, read N- to C-terminus: 1-(5-phosphoribosyl)-5-[(5-phosphoribosylamino)methylideneamino] imidazole-4-carboxamide isomerase (245 aa).

Asp-8 serves as the catalytic Proton acceptor. Asp-129 functions as the Proton donor in the catalytic mechanism.

This sequence belongs to the HisA/HisF family.

Its subcellular location is the cytoplasm. The catalysed reaction is 1-(5-phospho-beta-D-ribosyl)-5-[(5-phospho-beta-D-ribosylamino)methylideneamino]imidazole-4-carboxamide = 5-[(5-phospho-1-deoxy-D-ribulos-1-ylimino)methylamino]-1-(5-phospho-beta-D-ribosyl)imidazole-4-carboxamide. The protein operates within amino-acid biosynthesis; L-histidine biosynthesis; L-histidine from 5-phospho-alpha-D-ribose 1-diphosphate: step 4/9. This is 1-(5-phosphoribosyl)-5-[(5-phosphoribosylamino)methylideneamino] imidazole-4-carboxamide isomerase from Rhodopseudomonas palustris (strain HaA2).